Here is a 317-residue protein sequence, read N- to C-terminus: Acetylglutamate kinase (317 aa).

Residues 75–76 (GG), Arg-97, and Asn-196 contribute to the substrate site.

This sequence belongs to the acetylglutamate kinase family. ArgB subfamily.

It is found in the cytoplasm. The catalysed reaction is N-acetyl-L-glutamate + ATP = N-acetyl-L-glutamyl 5-phosphate + ADP. Its pathway is amino-acid biosynthesis; L-arginine biosynthesis; N(2)-acetyl-L-ornithine from L-glutamate: step 2/4. In terms of biological role, catalyzes the ATP-dependent phosphorylation of N-acetyl-L-glutamate. This Corynebacterium jeikeium (strain K411) protein is Acetylglutamate kinase.